The sequence spans 1813 residues: MARKKSSGLKITLIVLLAIVTIIAIALVAILPTKTPAVELVSTIPGKCPSAENDRLDEKINCIPDQFPTQALCAMQGCCWNPRNESPTPWCSFANNHGYEFEKISNPNINFEPNLKKNSPPTLFGDNITNLLLTTQSQTANRFRFKITDPNNQRYEVPHQFVNKDFSGPPASNPLYDVKITENPFSIKVIRKSNNKILFDTSIGPLVYSNQYLQISTKLPSKYIYGLGEHVHKRFRHDLYWKTWPIFTRDQLPGDNNNNLYGHQTFFMSIEDTSGKSFGVFLMNSNAMEVFIQPTPIVTYRVIGGILDFYIFLGDTPGQVVQQYQELTGRPAMPSYWSLGFQLSRWNYGSLDAVKEVVKRNRDARIPFDAQVTDIDYMEDKKDFTYNNKTFYGLPEFVKDLHDHGQKYIIILDPAISITSLANGNHYKTYERGNEQKVWVYQSDGTTPLIGEVWPGLTVYPDFTNPKCLDWWTNECSIFHEEIKYDGLWIDMNEVSSFVHGSTKGCSDNKLNYPPFIPDILDKLMYAKTICMDAIQHWGKQYDVHSLYGYSMAIATEKAIEKVFPNKRSFILTRSTFAGTGKHATHWLGDNTPSWEHMEWSITPMLEFGLFGMPFIGADICGFVVDTTEELCRRWMQIGAFYPYFRDHNAGGYMPQDPAYFGQDSLLVNTSRHYLDIWYTLLPYLYNLLYKAYVYGETVARPFLYEFYEDTNSWIEDLQFLWGSALLITPVLRQGADRMSAYIPDATWYDYETGGKRTWRKQRVEMYLPGDKIGLHVRGGYIIPTQQPAVNTTASRKNPLGLIIALDNNAAKGDFFWDDGESKDSIEKGKYILYTFSVLNNELDIICTHSSYQEGTTLAFETIKILGLANTVTQVQVAENNQQTIIHNSFTYHASNQSLIIDNLKLNLGKNFTVQWNQVSLDSEKIDCFPDNNPENKQNCEERGCLWEPNSAAEGPRCYFPKQYNPYLVKSTQYSSMGITVDLELNTATARIKMPSNPISVLRLEVKYHKNDMLQFKIYDPQNKRYEVPIPMDIPTTPTSTYENRLYDVNIKGNPFGIQIRRRSTGRIFWDSCLPWGLLLMNQFIQISTRLPSEYVYGFGGVGHRQFKQDLNWHKWGMFNRDQPSGYKISSYGFQPYIYMALGDGGNAHGVFLLNSNAMDVTFQPNPALTYRTIGGILDFYMFLGPNPEVATKQYHEVIGRPVKPPYWALGFHLCRYGYENTSEIRQLYEDMVSAQIPYDVQYTDIDYMERQLDFTIGKGFQDLPEFVDKIRDEGMKYIIILDPAISGNETQDYLAFQRGIEKDVFVKWPNTQDICWAKVWPDLPNITIDDSLTEDEAVNASRAHVAFPDFLKTSTAEWWATEIEDFYNTYMKFDGLWIDMNEPSSFVHGSVDNKCRNEILNYPPYMPALTKRNEGLHFRTMCMETQQTLSNGSSVLHYDVHNLYGWSQAKPTYDALQKTTGKRGIVISRSTYPSAGRWAGHWLGDNYANWDKIGKSIIGMMEFSLFGISFTGADICGFFNNSDYELCARWMQVGAFYPYSRNHNITDTRRQDPVSWNETFASMSTDILNIRYNLLPYFYTQMHDIHANGGTVIRPLLHEFFSETGTWDIYKQFLWGPAFMVTPVVEPYSESVTGYVPDGRWLDYHTGQDIGLRKRLHTLDAPLYKINLHVCGGHILPCQEPAQNTYFSRQNYMKLIVAADDNQTAQGYLFWDDGESIDTYEKGQYLLVQFNLNKATLTSTILKNGYINTREMRLGFINVWGKGNTVVQEVNITYKGNKESVKFSQEANKQILNIDLTANNIVLDEPIEISWT.

The Cytoplasmic segment spans residues 1 to 12; sequence MARKKSSGLKIT. Position 7 is a phosphoserine; by PKA (S7). The chain crosses the membrane as a helical; Signal-anchor for type II membrane protein span at residues 13 to 32; it reads LIVLLAIVTIIAIALVAILP. Over 33–1813 the chain is Lumenal; it reads TKTPAVELVS…LDEPIEISWT (1781 aa). The P-type 1 domain maps to 46–95; that stretch reads GKCPSAENDRLDEKINCIPDQFPTQALCAMQGCCWNPRNESPTPWCSFAN. 3 disulfide bridges follow: C48–C79, C62–C78, and C73–C91. Residues 95 to 991 form an isomaltase region; that stretch reads NNHGYEFEKI…DLELNTATAR (897 aa). N127 carries an N-linked (GlcNAc...) asparagine glycan. 2 residues coordinate substrate: D250 and D374. Y377 is modified (sulfotyrosine). The N-linked (GlcNAc...) asparagine glycan is linked to N388. Catalysis depends on D491, which acts as the Nucleophile; for isomaltase activity. Cysteines 506 and 531 form a disulfide. R574 contributes to the substrate binding site. The active-site For isomaltase activity is the D590. The cysteines at positions 621 and 632 are disulfide-linked. H648 contributes to the substrate binding site. Residues N669, N791, N896, and N911 are each glycosylated (N-linked (GlcNAc...) asparagine). The P-type 2 domain maps to 917 to 962; sequence NQVSLDSEKIDCFPDNNPENKQNCEERGCLWEPNSAAEGPRCYFPK. The sucrase stretch occupies residues 992 to 1813; sequence IKMPSNPISV…LDEPIEISWT (822 aa). 2 N-linked (GlcNAc...) asparagine glycosylation sites follow: N1221 and N1289. Y1294 bears the Sulfotyrosine mark. 2 N-linked (GlcNAc...) asparagine glycosylation sites follow: N1326 and N1340. Residues Y1368 and Y1371 each carry the sulfotyrosine modification. D1380 (nucleophile; for sucrase activity) is an active-site residue. The active-site For sucrase activity is E1383. The N-linked (GlcNAc...) asparagine glycan is linked to N1432. Catalysis depends on D1486, which acts as the Proton donor; for sucrase activity. N-linked (GlcNAc...) asparagine glycosylation is found at N1521, N1545, N1558, N1703, and N1772.

This sequence belongs to the glycosyl hydrolase 31 family. In terms of assembly, the resulting sucrase and isomaltase subunits stay associated with one another in a complex by non-covalent linkages. In terms of processing, the precursor is proteolytically cleaved when exposed to pancreatic proteases in the intestinal lumen. Post-translationally, sulfated.

The protein localises to the apical cell membrane. The catalysed reaction is Hydrolysis of sucrose and maltose by an alpha-D-glucosidase-type action.. It catalyses the reaction Hydrolysis of (1-&gt;6)-alpha-D-glucosidic linkages in some oligosaccharides produced from starch and glycogen by alpha-amylase, and in isomaltose.. Its function is as follows. Plays an important role in the final stage of carbohydrate digestion. Isomaltase activity is specific for both alpha-1,4- and alpha-1,6-oligosaccharides. The protein is Sucrase-isomaltase, intestinal (SI) of Suncus murinus (Asian house shrew).